A 686-amino-acid polypeptide reads, in one-letter code: Chondroitin proteoglycan 1 (686 aa).

The signal sequence occupies residues 1–18 (MLPKSVLIVAFLVASSSA). Residue N46 is glycosylated (N-linked (GlcNAc...) asparagine). The Chitin-binding type-2 1 domain maps to 63-120 (DTDCSTKEDGLYAIGGCSPQFLTCSGGIARIMDCPANLIYDQRIIACEYSYNVPECSG). C96 and C109 form a disulfide bridge. The N-linked (GlcNAc...) asparagine glycan is linked to N143. The 58-residue stretch at 228 to 285 (DKTCNGKADGFYSFGQCSDHYIACSNGYTIPMQCPARLSFDEARVICDYTMNVPECQN) folds into the Chitin-binding type-2 2 domain. A disulfide bridge links C261 with C274. The interval 284-312 (QNGSGNYEGSAEETTTEASGELPYSNGYG) is disordered. N285, N635, and N664 each carry an N-linked (GlcNAc...) asparagine glycan. Positions 658-686 (KLRSATNRTSTKEATTRTQNMHAHYHRNH) are disordered.

Functionally, required for polar body extrusion during cytokinesis in embryo development. Affects cortical granule size. Shown to have roles in meiotic chromosome segregation, osmotic barrier function and polarization in conjunction with cpg-2. Binds chitin. This chain is Chondroitin proteoglycan 1 (cpg-1), found in Caenorhabditis briggsae.